We begin with the raw amino-acid sequence, 237 residues long: uncharacterized protein (237 aa).

A divalent metal cation is bound by residues E91, E93, and D122.

Belongs to the FAH family.

This is an uncharacterized protein from Methanocaldococcus jannaschii (strain ATCC 43067 / DSM 2661 / JAL-1 / JCM 10045 / NBRC 100440) (Methanococcus jannaschii).